Consider the following 313-residue polypeptide: 2,3-dihydroxyphenylpropionate/2,3-dihydroxicinnamic acid 1,2-dioxygenase (313 aa).

The Proton donor role is filled by H115. H179 functions as the Proton acceptor in the catalytic mechanism.

The protein belongs to the LigB/MhpB extradiol dioxygenase family. As to quaternary structure, homotetramer. Fe(2+) serves as cofactor.

It carries out the reaction 3-(2,3-dihydroxyphenyl)propanoate + O2 = (2Z,4E)-2-hydroxy-6-oxonona-2,4-dienedioate + H(+). The enzyme catalyses (2E)-3-(2,3-dihydroxyphenyl)prop-2-enoate + O2 = (2Z,4E,7E)-2-hydroxy-6-oxonona-2,4,7-trienedioate + H(+). The protein operates within aromatic compound metabolism; 3-phenylpropanoate degradation. In terms of biological role, catalyzes the non-heme iron(II)-dependent oxidative cleavage of 2,3-dihydroxyphenylpropionic acid and 2,3-dihydroxicinnamic acid into 2-hydroxy-6-ketononadienedioate and 2-hydroxy-6-ketononatrienedioate, respectively. This chain is 2,3-dihydroxyphenylpropionate/2,3-dihydroxicinnamic acid 1,2-dioxygenase, found in Xanthobacter autotrophicus (strain ATCC BAA-1158 / Py2).